A 273-amino-acid polypeptide reads, in one-letter code: Anthocyanin regulatory C1 protein (273 aa).

2 consecutive HTH myb-type domains span residues 9 to 65 and 66 to 116; these read KEGV…RPNI and RRGN…GRRA. DNA-binding regions (H-T-H motif) lie at residues 37 to 61 and 89 to 112; these read WREVPQKAGLRRCGKSCRLRWLNYL and WSLIAGRLPGRTDNEIKNYWNSTL. 2 disordered regions span residues 137–164 and 196–220; these read ATPAATSGACETGQNSAAHRADPDSAGT and AGETATPMAGGGGGGGGEAGSSDDC. Positions 204–214 are enriched in gly residues; that stretch reads AGGGGGGGGEA.

The protein resides in the nucleus. In terms of biological role, controls the expression of genes involved in anthocyanin biosynthesis. Regulates the expression of at least 3 structural genes: chalcone synthase, dihydroflavonol reductase and flavonol O(3) glucosyltransferase. C1 acts as a trans-acting factor. This chain is Anthocyanin regulatory C1 protein (C1), found in Zea mays (Maize).